A 1690-amino-acid chain; its full sequence is DNA-directed RNA polymerase subunit beta' (1690 aa).

Positions 63, 65, 78, and 81 each coordinate Zn(2+). Residues Asp-753, Asp-755, and Asp-757 each contribute to the Mg(2+) site. Cys-1107, Cys-1295, Cys-1302, and Cys-1305 together coordinate Zn(2+).

Belongs to the RNA polymerase beta' chain family. As to quaternary structure, the RNAP catalytic core consists of 2 alpha, 1 beta, 1 beta' and 1 omega subunit. When a sigma factor is associated with the core the holoenzyme is formed, which can initiate transcription. Mg(2+) is required as a cofactor. Zn(2+) serves as cofactor.

The catalysed reaction is RNA(n) + a ribonucleoside 5'-triphosphate = RNA(n+1) + diphosphate. Functionally, DNA-dependent RNA polymerase catalyzes the transcription of DNA into RNA using the four ribonucleoside triphosphates as substrates. The sequence is that of DNA-directed RNA polymerase subunit beta' from Thermotoga petrophila (strain ATCC BAA-488 / DSM 13995 / JCM 10881 / RKU-1).